The following is a 123-amino-acid chain: Beta-defensin 126 (123 aa).

The first 20 residues, 1–20, serve as a signal peptide directing secretion; sequence MKSLLFTLAVFMLLAQLVSG. The in vitro binds to LPS, mediates antimicrobial activity and inhibits LPS-mediated inflammation stretch occupies residues 21–63; it reads NLYVKRCLNDIGICKKTCKPEEVRSEHGWVMCGKRKACCVPAD. 3 disulfides stabilise this stretch: cysteine 27–cysteine 58, cysteine 34–cysteine 52, and cysteine 38–cysteine 59.

It belongs to the beta-defensin family. Homodimer or homooligomer; disulfide-linked. Post-translationally, O-glycosylated; glycans contain sialic acids alpha(2,3)-linked to galactose and N-acetylgalactosamine. The C-terminal O-glycosylation contributes substantially to the sperm glyocalyx. In terms of tissue distribution, high-level and epididymis-specific expression. Detected in epithelial cells lining the efferent ductules, initial segment, and cauda regions of the epididymis, but not on spermatozoa.

The protein localises to the secreted. Highly glycosylated atypical beta-defensin involved in several aspects of sperm function. Facilitates sperm transport in the female reproductive tract and contributes to sperm protection against immunodetection; both functions are probably implicating the negative surface charge provided by its O-linked oligosaccharides in the sperm glycocalyx. Involved in binding of sperm to oviductal epithelial cells to form a sperm reservoir until ovulation. Release from the sperm surface during capacitation and ovaluation by an elevation of oviductal fluid pH is unmasking other surface components and allows sperm to penetrate the cumulus matrix and bind to the zona pellucida of the oocyte. In vitro has antimicrobial activity and may inhibit LPS-mediated inflammation. This chain is Beta-defensin 126 (DEFB126), found in Macaca fascicularis (Crab-eating macaque).